A 159-amino-acid chain; its full sequence is Probable carbonic anhydrase (159 aa).

Substrate contacts are provided by residues 33 to 35 and 48 to 49; these read RGD and QD. Zn(2+)-binding residues include His-54, His-71, and His-76.

Belongs to the gamma-class carbonic anhydrase family. Requires Zn(2+) as cofactor.

It carries out the reaction hydrogencarbonate + H(+) = CO2 + H2O. In terms of biological role, probably reversibly hydrates carbon dioxide. This Methanocaldococcus jannaschii (strain ATCC 43067 / DSM 2661 / JAL-1 / JCM 10045 / NBRC 100440) (Methanococcus jannaschii) protein is Probable carbonic anhydrase.